A 360-amino-acid chain; its full sequence is Vignain (360 aa).

Positions 1-20 (MQKFILLALSLALVLAITES) are cleaved as a signal peptide. Residues 21 to 124 (FDFHEKELES…NGTFMYEKVD (104 aa)) constitute a propeptide, activation peptide. N115 is a glycosylation site (N-linked (GlcNAc...) asparagine). 3 disulfides stabilise this stretch: C147/C189, C181/C222, and C280/C332. C150 is a catalytic residue. Active-site residues include H286 and N307. A disordered region spans residues 341–360 (PIKKSSNNPSGIKSSPKDEL). Residues 344-353 (KSSNNPSGIK) are compositionally biased toward polar residues. A propeptide spans 354–360 (SSPKDEL) (removed in mature form). The prevents secretion from ER stretch occupies residues 357–360 (KDEL).

This sequence belongs to the peptidase C1 family. Post-translationally, the potential N-glycosylation site at Asn-115 is not glycosylated.

It localises to the cytoplasmic vesicle. With respect to regulation, low pH triggers activation of the protease and removal of the propeptide and the KDEL motif. Its function is as follows. Involved in programmed cell death. Shows a pronounced preference for hydrophobic residues in the P2 position and no obvious preference in the P1 position of the cleavage site. Accepts proline at the P1 and P1' positions. This chain is Vignain (CYSEP), found in Ricinus communis (Castor bean).